Here is a 141-residue protein sequence, read N- to C-terminus: Putative pre-16S rRNA nuclease (141 aa).

Belongs to the YqgF nuclease family.

Its subcellular location is the cytoplasm. Functionally, could be a nuclease involved in processing of the 5'-end of pre-16S rRNA. This is Putative pre-16S rRNA nuclease from Shewanella denitrificans (strain OS217 / ATCC BAA-1090 / DSM 15013).